Here is a 264-residue protein sequence, read N- to C-terminus: 3-methyl-2-oxobutanoate hydroxymethyltransferase (264 aa).

Residues aspartate 45 and aspartate 84 each contribute to the Mg(2+) site. 3-methyl-2-oxobutanoate is bound by residues 45-46 (DS), aspartate 84, and lysine 112. Glutamate 114 is a binding site for Mg(2+). Glutamate 181 functions as the Proton acceptor in the catalytic mechanism.

Belongs to the PanB family. As to quaternary structure, homodecamer; pentamer of dimers. Mg(2+) serves as cofactor.

The protein resides in the cytoplasm. It carries out the reaction 3-methyl-2-oxobutanoate + (6R)-5,10-methylene-5,6,7,8-tetrahydrofolate + H2O = 2-dehydropantoate + (6S)-5,6,7,8-tetrahydrofolate. Its pathway is cofactor biosynthesis; (R)-pantothenate biosynthesis; (R)-pantoate from 3-methyl-2-oxobutanoate: step 1/2. Catalyzes the reversible reaction in which hydroxymethyl group from 5,10-methylenetetrahydrofolate is transferred onto alpha-ketoisovalerate to form ketopantoate. The chain is 3-methyl-2-oxobutanoate hydroxymethyltransferase from Aeromonas hydrophila subsp. hydrophila (strain ATCC 7966 / DSM 30187 / BCRC 13018 / CCUG 14551 / JCM 1027 / KCTC 2358 / NCIMB 9240 / NCTC 8049).